Consider the following 67-residue polypeptide: Small ribosomal subunit protein bS21 (67 aa).

The protein belongs to the bacterial ribosomal protein bS21 family.

The chain is Small ribosomal subunit protein bS21 from Paramagnetospirillum magneticum (strain ATCC 700264 / AMB-1) (Magnetospirillum magneticum).